The chain runs to 377 residues: Chaperone protein DnaJ (377 aa).

In terms of domain architecture, J spans Asp-5–Gly-70. The CR-type zinc finger occupies Gly-134–Thr-212. Zn(2+) contacts are provided by Cys-147, Cys-150, Cys-164, Cys-167, Cys-186, Cys-189, Cys-200, and Cys-203. CXXCXGXG motif repeat units lie at residues Cys-147–Gly-154, Cys-164–Gly-171, Cys-186–Gly-193, and Cys-200–Gly-207.

The protein belongs to the DnaJ family. Homodimer. It depends on Zn(2+) as a cofactor.

The protein localises to the cytoplasm. Its function is as follows. Participates actively in the response to hyperosmotic and heat shock by preventing the aggregation of stress-denatured proteins and by disaggregating proteins, also in an autonomous, DnaK-independent fashion. Unfolded proteins bind initially to DnaJ; upon interaction with the DnaJ-bound protein, DnaK hydrolyzes its bound ATP, resulting in the formation of a stable complex. GrpE releases ADP from DnaK; ATP binding to DnaK triggers the release of the substrate protein, thus completing the reaction cycle. Several rounds of ATP-dependent interactions between DnaJ, DnaK and GrpE are required for fully efficient folding. Also involved, together with DnaK and GrpE, in the DNA replication of plasmids through activation of initiation proteins. The protein is Chaperone protein DnaJ of Actinobacillus succinogenes (strain ATCC 55618 / DSM 22257 / CCUG 43843 / 130Z).